A 285-amino-acid polypeptide reads, in one-letter code: 4-hydroxybenzoate octaprenyltransferase (285 aa).

8 helical membrane-spanning segments follow: residues Leu28 to Phe48, Ile86 to Ile106, Asn110 to Phe130, Phe133 to Phe153, Val160 to Thr180, Val207 to Met227, Trp232 to Ile252, and Ala262 to Ile284.

It belongs to the UbiA prenyltransferase family. Mg(2+) is required as a cofactor.

The protein localises to the cell inner membrane. The enzyme catalyses all-trans-octaprenyl diphosphate + 4-hydroxybenzoate = 4-hydroxy-3-(all-trans-octaprenyl)benzoate + diphosphate. It functions in the pathway cofactor biosynthesis; ubiquinone biosynthesis. Catalyzes the prenylation of para-hydroxybenzoate (PHB) with an all-trans polyprenyl group. Mediates the second step in the final reaction sequence of ubiquinone-8 (UQ-8) biosynthesis, which is the condensation of the polyisoprenoid side chain with PHB, generating the first membrane-bound Q intermediate 3-octaprenyl-4-hydroxybenzoate. This Cupriavidus pinatubonensis (strain JMP 134 / LMG 1197) (Cupriavidus necator (strain JMP 134)) protein is 4-hydroxybenzoate octaprenyltransferase.